Reading from the N-terminus, the 426-residue chain is Synaptotagmin-13 (426 aa).

The Vesicular segment spans residues 1-6; it reads MVLSVP. A helical transmembrane segment spans residues 7-29; that stretch reads VIALGATLGTATSILALCGVTCL. Over 30 to 426 the chain is Cytoplasmic; sequence CRHMHPKKGL…QIAMWHQLHL (397 aa). 2 C2 domains span residues 158-275 and 287-422; these read QAPK…AQWG and GAGE…AMWH.

This sequence belongs to the synaptotagmin family. In terms of assembly, interacts with NRXN1. In terms of tissue distribution, expressed in brain, heart, spleen, lung and testis.

Its subcellular location is the cytoplasmic vesicle membrane. May be involved in transport vesicle docking to the plasma membrane. The chain is Synaptotagmin-13 (Syt13) from Mus musculus (Mouse).